We begin with the raw amino-acid sequence, 416 residues long: UPF0761 membrane protein Mpe_A1422 (416 aa).

The next 6 membrane-spanning stretches (helical) occupy residues 63 to 83 (IALVPLATVTLAIFSAFPMFG), 120 to 140 (LGTVGLVVLVLTALALMLTID), 159 to 179 (VLVYWAAATLGPLLLGVSLTL), 198 to 218 (LSVLLNALEFGLLAAAMAGLF), 234 to 256 (GGLFVSAGFELAKKGLAWYLAQV), and 271 to 291 (IFLIWLYLGWVIVLLGAVIAA).

This sequence belongs to the UPF0761 family.

Its subcellular location is the cell inner membrane. The sequence is that of UPF0761 membrane protein Mpe_A1422 from Methylibium petroleiphilum (strain ATCC BAA-1232 / LMG 22953 / PM1).